Reading from the N-terminus, the 270-residue chain is ES1 protein, mitochondrial (270 aa).

In terms of tissue distribution, expressed specifically in the inner segments of cone photoreceptor cells of the retina (at protein level).

The protein localises to the mitochondrion. Its function is as follows. Plays a role in promoting mitochondrial enlargement in cone photoreceptor cells in a fusion-independent and ATP-dependent manner. The polypeptide is ES1 protein, mitochondrial (Danio rerio (Zebrafish)).